Here is a 297-residue protein sequence, read N- to C-terminus: tRNA dimethylallyltransferase (297 aa).

Position 15–22 (15–22) interacts with ATP; sequence GPTASGKS. 17 to 22 serves as a coordination point for substrate; sequence TASGKS. 2 interaction with substrate tRNA regions span residues 40–43 and 164–168; these read DSMQ and QRIVR.

This sequence belongs to the IPP transferase family. In terms of assembly, monomer. Requires Mg(2+) as cofactor.

It catalyses the reaction adenosine(37) in tRNA + dimethylallyl diphosphate = N(6)-dimethylallyladenosine(37) in tRNA + diphosphate. Catalyzes the transfer of a dimethylallyl group onto the adenine at position 37 in tRNAs that read codons beginning with uridine, leading to the formation of N6-(dimethylallyl)adenosine (i(6)A). The protein is tRNA dimethylallyltransferase of Rhizobium etli (strain ATCC 51251 / DSM 11541 / JCM 21823 / NBRC 15573 / CFN 42).